A 135-amino-acid chain; its full sequence is Probable transporter PD_1892 (135 aa).

The next 4 helical transmembrane spans lie at 4–24 (YWYP…LLLL), 45–65 (AQNI…TVIF), 71–91 (VTVA…GLGT), and 114–134 (IVAT…MGVY).

The protein belongs to the TsuA/YedE (TC 9.B.102) family.

The protein resides in the cell inner membrane. The protein is Probable transporter PD_1892 of Xylella fastidiosa (strain Temecula1 / ATCC 700964).